The following is a 359-amino-acid chain: Phospho-N-acetylmuramoyl-pentapeptide-transferase (359 aa).

At 1-25 (MLYQLALLLKDYWFAFNVLKYITFR) the chain is on the periplasmic side. Residues 26–48 (SFTAVLIAFFLTLVLSPSFINRL) traverse the membrane as a helical segment. Topologically, residues 49–74 (RKIQRLFGGYVREYTPESHEVKKYTP) are cytoplasmic. Muraymycin D2 contacts are provided by lysine 70 and threonine 75. A helical transmembrane segment spans residues 75–92 (TMGGIVILIVVTLSTLLL). The Periplasmic segment spans residues 93-98 (MRWDIK). A helical membrane pass occupies residues 99–120 (YTWVVLLSFLSFGTIGFWDDYV). Topologically, residues 121-130 (KLKNKKGISI) are cytoplasmic. A helical transmembrane segment spans residues 131-152 (KTKFLLQVLSASLISVLIYYWA). The Periplasmic segment spans residues 153–172 (DIDTILYFPFFKELYVDLGV). Residues 173-194 (LYLPFAVFVIVGSANAVNLTDG) traverse the membrane as a helical segment. Muraymycin D2-binding residues include asparagine 190, aspartate 193, and aspartate 196. Residues 195–197 (LDG) are Cytoplasmic-facing. The chain crosses the membrane as a helical span at residues 198–218 (LAIGPAMTTATALGVVAYAVG). At 219-233 (HSKIAQYLNIPYVPY) the chain is on the periplasmic side. A helical transmembrane segment spans residues 234–255 (AGELTVFCFALVGAGLGFLWFN). Topologically, residues 256 to 264 (SFPAQMFMG) are cytoplasmic. Glycine 264 and serine 268 together coordinate muraymycin D2. Residues 265–280 (DVGSLSIGASLATVAL) traverse the membrane as a helical segment. Residues 281–284 (LTKS) lie on the Periplasmic side of the membrane. A helical membrane pass occupies residues 285 to 310 (EFIFAVAAGVFVFETISVILQIIYFR). 2 residues coordinate muraymycin D2: glutamine 305 and alanine 321. Topologically, residues 311–332 (WTGGKRLFKRAPFHHHLELNGL) are cytoplasmic. The chain crosses the membrane as a helical span at residues 333–355 (PEPKIVVRMWIISILLAIIAISM). Over 356–359 (LKLR) the chain is Periplasmic.

Belongs to the glycosyltransferase 4 family. MraY subfamily. As to quaternary structure, homodimer. Mg(2+) serves as cofactor. The cofactor is Mn(2+).

It is found in the cell inner membrane. The enzyme catalyses UDP-N-acetyl-alpha-D-muramoyl-L-alanyl-gamma-D-glutamyl-meso-2,6-diaminopimeloyl-D-alanyl-D-alanine + di-trans,octa-cis-undecaprenyl phosphate = di-trans,octa-cis-undecaprenyl diphospho-N-acetyl-alpha-D-muramoyl-L-alanyl-D-glutamyl-meso-2,6-diaminopimeloyl-D-alanyl-D-alanine + UMP. Its pathway is cell wall biogenesis; peptidoglycan biosynthesis. With respect to regulation, inhibited by natural nucleoside antibiotics including tunicamycin, capuramycin and muraymycin. Usually the cofactor magnesium is not required for antibiotic binding. In terms of biological role, catalyzes the initial step of the lipid cycle reactions in the biosynthesis of the cell wall peptidoglycan: transfers peptidoglycan precursor phospho-MurNAc-pentapeptide from UDP-MurNAc-pentapeptide onto the lipid carrier undecaprenyl phosphate, yielding undecaprenyl-pyrophosphoryl-MurNAc-pentapeptide, known as lipid I. The chain is Phospho-N-acetylmuramoyl-pentapeptide-transferase from Aquifex aeolicus (strain VF5).